The sequence spans 597 residues: (E)-sabinene hydrate synthase, chloroplastic (597 aa).

The transit peptide at 1–47 (MSTISINHVGILRNPLQCKNKRTSINKPWSLSLPRSSPASRLVKPCR) directs the protein to the chloroplast. Mn(2+) contacts are provided by Asp353 and Asp357. The DDXXD motif motif lies at 353-357 (DDVYD). 2 homodimerization regions span residues 359 to 365 (YGTLDEL) and 431 to 468 (EAGW…VSLP). Mn(2+) is bound by residues Asp495 and Glu503.

Belongs to the terpene synthase family. Homodimer. It depends on Mn(2+) as a cofactor. Requires Mg(2+) as cofactor.

It localises to the plastid. Its subcellular location is the chloroplast. The catalysed reaction is (2E)-geranyl diphosphate + H2O = sabinene hydrate + diphosphate. The protein operates within secondary metabolite biosynthesis; terpenoid biosynthesis. Functionally, involved in the biosynthesis of phenolic monoterpenes natural products. Monoterpene synthase which catalyzes the conversion of geranyl diphosphate (GPP) to sabinene hydrate, specifically (E)-sabinene hydrate, and the formation of minor amounts and traces of several other monoterpenes (e.g. mainly alpha-pinene, limonene and alpha-terpineol). This is (E)-sabinene hydrate synthase, chloroplastic from Thymus vulgaris (Thyme).